Consider the following 567-residue polypeptide: Adenine deaminase 2 (567 aa).

It belongs to the metallo-dependent hydrolases superfamily. Adenine deaminase family. It depends on Mn(2+) as a cofactor.

It catalyses the reaction adenine + H2O + H(+) = hypoxanthine + NH4(+). The polypeptide is Adenine deaminase 2 (Oenococcus oeni (strain ATCC BAA-331 / PSU-1)).